Reading from the N-terminus, the 250-residue chain is Transmembrane protein 106C (250 aa).

The disordered stretch occupies residues 1–25 (MGSQHSAAARPSSCRRKQEDDRDGL). Gly-2 is lipidated: N-myristoyl glycine. The span at 16–25 (RKQEDDRDGL) shows a compositional bias: basic and acidic residues. A helical transmembrane segment spans residues 87–107 (YVLLSILLCLLASGLVVFFLF). 2 N-linked (GlcNAc...) asparagine glycosylation sites follow: Asn-173 and Asn-186. A helical transmembrane segment spans residues 197 to 217 (FSYVYFFCTVPEILVHNIVIF).

It belongs to the TMEM106 family. In terms of assembly, interacts with TMEM106B.

It is found in the endoplasmic reticulum membrane. Its subcellular location is the membrane. The protein is Transmembrane protein 106C (TMEM106C) of Homo sapiens (Human).